A 471-amino-acid polypeptide reads, in one-letter code: Phosphatidate cytidylyltransferase 3 (471 aa).

Positions 1–72 (MAMEKDLSPN…HRRRSSENLA (72 aa)) are disordered. Polar residues predominate over residues 21–35 (SYPTTPTSRMNTNNQ). Helical transmembrane passes span 97–116 (WIRTCSSLWMLGGVVFIIYM), 120–139 (YIWAMVVVIQIFMAKELFFL), 149–169 (LPGFWLLNWHFFFTAMLFVYG), 196–216 (YQMVICYFLYIAGLIWFILTL), 228–250 (YAWTHMILIVVFTQSSFTVANIF), 255–277 (WFLLPAALIAMNDVAAYFFGFYF), 293–313 (GFIGASVATIISAFIFANVLG), and 368–388 (FSLGLFASIMAPFGGFFASGF).

The protein belongs to the CDS family. It depends on Mg(2+) as a cofactor.

The protein localises to the membrane. It catalyses the reaction a 1,2-diacyl-sn-glycero-3-phosphate + CTP + H(+) = a CDP-1,2-diacyl-sn-glycerol + diphosphate. Its pathway is phospholipid metabolism; CDP-diacylglycerol biosynthesis; CDP-diacylglycerol from sn-glycerol 3-phosphate: step 3/3. May be involved in the synthesis of minor phospholipids and in modulation of IP3-mediated signal transduction. The protein is Phosphatidate cytidylyltransferase 3 of Arabidopsis thaliana (Mouse-ear cress).